A 968-amino-acid chain; its full sequence is Glycine dehydrogenase (decarboxylating) (968 aa).

Lys-712 is subject to N6-(pyridoxal phosphate)lysine.

This sequence belongs to the GcvP family. The glycine cleavage system is composed of four proteins: P, T, L and H. It depends on pyridoxal 5'-phosphate as a cofactor.

The catalysed reaction is N(6)-[(R)-lipoyl]-L-lysyl-[glycine-cleavage complex H protein] + glycine + H(+) = N(6)-[(R)-S(8)-aminomethyldihydrolipoyl]-L-lysyl-[glycine-cleavage complex H protein] + CO2. Functionally, the glycine cleavage system catalyzes the degradation of glycine. The P protein binds the alpha-amino group of glycine through its pyridoxal phosphate cofactor; CO(2) is released and the remaining methylamine moiety is then transferred to the lipoamide cofactor of the H protein. This chain is Glycine dehydrogenase (decarboxylating), found in Prochlorococcus marinus (strain NATL1A).